The chain runs to 174 residues: CASP-like protein 1 (174 aa).

A disordered region spans residues 1–25 (MDSKSGRSESAINIPESNSTKHKST). Residues 1 to 46 (MDSKSGRSESAINIPESNSTKHKSTAVHTATKVAAVAPRGGGWRRG) are Cytoplasmic-facing. Positions 8–18 (SESAINIPESN) are enriched in polar residues. The helical transmembrane segment at 47–67 (VSIFDFILRICALAAALAATA) threads the bilayer. The Extracellular portion of the chain corresponds to 68 to 96 (TMGTTDQTLPFFTQIIQFQASYDDLPVFT). A helical transmembrane segment spans residues 97–117 (FFVVANGIASGYLVLSLPFSI). Over 118–119 (AT) the chain is Cytoplasmic. A helical transmembrane segment spans residues 120–139 (IVRPHAAAIKLLLIIFDTQF). The Extracellular portion of the chain corresponds to 140–150 (NDFCQRVSGAV). Residues 151–171 (VASFVAAVILIFLVVLSAVAI) traverse the membrane as a helical segment. The Cytoplasmic portion of the chain corresponds to 172–174 (RKH).

This sequence belongs to the Casparian strip membrane proteins (CASP) family. In terms of assembly, homodimer and heterodimers.

It is found in the cell membrane. The protein is CASP-like protein 1 of Triphysaria pusilla (Dwarf owl's-clover).